A 259-amino-acid chain; its full sequence is Type III pantothenate kinase (259 aa).

6–13 (DIGNTNVV) is a binding site for ATP. Substrate is bound at residue 107-110 (GADR). The active-site Proton acceptor is the Asp-109. Position 129 (Asp-129) interacts with K(+). Residue Thr-132 coordinates ATP. Residue Thr-184 participates in substrate binding.

It belongs to the type III pantothenate kinase family. In terms of assembly, homodimer. Requires NH4(+) as cofactor. K(+) is required as a cofactor.

Its subcellular location is the cytoplasm. It catalyses the reaction (R)-pantothenate + ATP = (R)-4'-phosphopantothenate + ADP + H(+). The protein operates within cofactor biosynthesis; coenzyme A biosynthesis; CoA from (R)-pantothenate: step 1/5. Catalyzes the phosphorylation of pantothenate (Pan), the first step in CoA biosynthesis. The protein is Type III pantothenate kinase of Thermomicrobium roseum (strain ATCC 27502 / DSM 5159 / P-2).